A 306-amino-acid polypeptide reads, in one-letter code: 4-hydroxy-3-methylbut-2-enyl diphosphate reductase (306 aa).

Cys12 serves as a coordination point for [4Fe-4S] cluster. Residues His41 and His74 each coordinate (2E)-4-hydroxy-3-methylbut-2-enyl diphosphate. Dimethylallyl diphosphate-binding residues include His41 and His74. His41 and His74 together coordinate isopentenyl diphosphate. Cys96 contacts [4Fe-4S] cluster. His124 is a binding site for (2E)-4-hydroxy-3-methylbut-2-enyl diphosphate. His124 serves as a coordination point for dimethylallyl diphosphate. His124 serves as a coordination point for isopentenyl diphosphate. Catalysis depends on Glu126, which acts as the Proton donor. Thr164 provides a ligand contact to (2E)-4-hydroxy-3-methylbut-2-enyl diphosphate. Residue Cys194 coordinates [4Fe-4S] cluster. (2E)-4-hydroxy-3-methylbut-2-enyl diphosphate contacts are provided by Ser222, Ser223, Asn224, and Ser266. The dimethylallyl diphosphate site is built by Ser222, Ser223, Asn224, and Ser266. Isopentenyl diphosphate is bound by residues Ser222, Ser223, Asn224, and Ser266.

It belongs to the IspH family. [4Fe-4S] cluster serves as cofactor.

It catalyses the reaction isopentenyl diphosphate + 2 oxidized [2Fe-2S]-[ferredoxin] + H2O = (2E)-4-hydroxy-3-methylbut-2-enyl diphosphate + 2 reduced [2Fe-2S]-[ferredoxin] + 2 H(+). It carries out the reaction dimethylallyl diphosphate + 2 oxidized [2Fe-2S]-[ferredoxin] + H2O = (2E)-4-hydroxy-3-methylbut-2-enyl diphosphate + 2 reduced [2Fe-2S]-[ferredoxin] + 2 H(+). Its pathway is isoprenoid biosynthesis; dimethylallyl diphosphate biosynthesis; dimethylallyl diphosphate from (2E)-4-hydroxy-3-methylbutenyl diphosphate: step 1/1. The protein operates within isoprenoid biosynthesis; isopentenyl diphosphate biosynthesis via DXP pathway; isopentenyl diphosphate from 1-deoxy-D-xylulose 5-phosphate: step 6/6. Functionally, catalyzes the conversion of 1-hydroxy-2-methyl-2-(E)-butenyl 4-diphosphate (HMBPP) into a mixture of isopentenyl diphosphate (IPP) and dimethylallyl diphosphate (DMAPP). Acts in the terminal step of the DOXP/MEP pathway for isoprenoid precursor biosynthesis. The polypeptide is 4-hydroxy-3-methylbut-2-enyl diphosphate reductase (Ruthia magnifica subsp. Calyptogena magnifica).